The chain runs to 427 residues: MASVVLIGTQWGDEGKGKVTDFLAEKADLVVRYQGGNNAGHTVVAKGEEFKLHLIPSGILYEDKTCVIGNGVVVDPKVLLEELAYLSERKVKTGKLLISSNAHVIMPYHRLLDALEEDSRGEHKIGTTKRGIGPAYMDKTLRIGIRIMDLIDDEEFAAKLRRNLQEKNNLLTKVYGVEPLDYDAIYQEYSGYAQKIRGLVADSSLVIDESLKAGEKVLFEGAQGTLLDLDHGTYPYVTSSHPIAGGACTGAGVGPTRINRVVGVIKAYTTRVGEGPFPTELADETGELMRQNGHEFGTTTGRARRCGWFDAVIARYAVRVSGISDFALMKLDVLSGFEKIKICVGYRVNNEVIYEFPQSQKIFKACEPVYEVIEGWQEDITGVTRFEDLPKAAQDYVRRIEQLTETQVTLIAVGPGREQTIVRGEIF.

Residues 12 to 18 (GDEGKGK) and 40 to 42 (GHT) contribute to the GTP site. The active-site Proton acceptor is Asp13. Asp13 and Gly40 together coordinate Mg(2+). Residues 13-16 (DEGK), 38-41 (NAGH), Thr128, Arg142, Gln223, Thr238, and Arg302 contribute to the IMP site. His41 functions as the Proton donor in the catalytic mechanism. 298–304 (TTTGRAR) is a binding site for substrate. Residues Arg304, 330–332 (KLD), and 412–414 (AVG) each bind GTP.

It belongs to the adenylosuccinate synthetase family. As to quaternary structure, homodimer. It depends on Mg(2+) as a cofactor.

It localises to the cytoplasm. It catalyses the reaction IMP + L-aspartate + GTP = N(6)-(1,2-dicarboxyethyl)-AMP + GDP + phosphate + 2 H(+). It participates in purine metabolism; AMP biosynthesis via de novo pathway; AMP from IMP: step 1/2. In terms of biological role, plays an important role in the de novo pathway of purine nucleotide biosynthesis. Catalyzes the first committed step in the biosynthesis of AMP from IMP. The chain is Adenylosuccinate synthetase from Desulfitobacterium hafniense (strain DSM 10664 / DCB-2).